A 390-amino-acid chain; its full sequence is Purine permease 21 (390 aa).

A disordered region spans residues 12-34; sequence QQGKEPIPTDQDERSSVSGSQTK. Helical transmembrane passes span 44–64, 78–98, 118–138, 140–160, 169–189, 204–224, 241–261, 287–307, 312–332, and 336–356; these read WLRV…ATIL, LATV…LLSV, LVYI…SIGL, YLPV…TAFF, LTPI…LLAF, YVKG…LLSL, VINM…VGLF, LVWT…LIFE, FSNA…VIIF, and MNGL…SYVY. The tract at residues 367 to 390 is disordered; the sequence is KSNEIPTTESPDRPEAEGSSEQSK.

The protein belongs to the purine permeases (TC 2.A.7.14) family. As to expression, expressed in mesophyll cells.

Its subcellular location is the membrane. This chain is Purine permease 21, found in Arabidopsis thaliana (Mouse-ear cress).